A 124-amino-acid polypeptide reads, in one-letter code: KESAAAKFERQHIDSSTSSVSSSNYCNEMMTSRNLTQDRCKPVNTFVHESLADVQAVCSQKNVACKNGQTNCYQSYSAMSITDCRETGNSKYPNCAYQTTQAEKHIIVACEGNPYVPVHYDASV.

Residues 1–13 (KESAAAKFERQHI) are compositionally biased toward basic and acidic residues. The disordered stretch occupies residues 1–23 (KESAAAKFERQHIDSSTSSVSSS). 2 residues coordinate substrate: Lys-7 and Arg-10. Catalysis depends on His-12, which acts as the Proton acceptor. Disulfide bonds link Cys-26–Cys-84, Cys-40–Cys-95, Cys-58–Cys-110, and Cys-65–Cys-72. Residue Asn-34 is glycosylated (N-linked (GlcNAc...) asparagine). Residues 41–45 (KPVNT), Lys-66, and Arg-85 contribute to the substrate site. The Proton donor role is filled by His-119.

It belongs to the pancreatic ribonuclease family. In terms of assembly, monomer. Interacts with and forms tight 1:1 complexes with RNH1. Dimerization of two such complexes may occur. Interaction with RNH1 inhibits this protein. Pancreas.

It localises to the secreted. It carries out the reaction an [RNA] containing cytidine + H2O = an [RNA]-3'-cytidine-3'-phosphate + a 5'-hydroxy-ribonucleotide-3'-[RNA].. The enzyme catalyses an [RNA] containing uridine + H2O = an [RNA]-3'-uridine-3'-phosphate + a 5'-hydroxy-ribonucleotide-3'-[RNA].. Its function is as follows. Endonuclease that catalyzes the cleavage of RNA on the 3' side of pyrimidine nucleotides. Acts on single-stranded and double-stranded RNA. The sequence is that of Ribonuclease pancreatic (RNASE1) from Giraffa camelopardalis (Giraffe).